The sequence spans 470 residues: Pyruvate kinase I (470 aa).

Arginine 32 is a substrate binding site. K(+)-binding residues include asparagine 34, serine 36, aspartate 66, and threonine 67. An ATP-binding site is contributed by 34 to 37 (NFSH). ATP-binding residues include arginine 73 and lysine 156. Residue glutamate 222 participates in Mg(2+) binding. Substrate contacts are provided by glycine 245, aspartate 246, and threonine 278. Aspartate 246 contributes to the Mg(2+) binding site.

It belongs to the pyruvate kinase family. Homotetramer. Mg(2+) serves as cofactor. K(+) is required as a cofactor.

The enzyme catalyses pyruvate + ATP = phosphoenolpyruvate + ADP + H(+). It functions in the pathway carbohydrate degradation; glycolysis; pyruvate from D-glyceraldehyde 3-phosphate: step 5/5. This Salmonella typhi protein is Pyruvate kinase I (pykF).